We begin with the raw amino-acid sequence, 785 residues long: 5-methyltetrahydropteroyltriglutamate--homocysteine methyltransferase (785 aa).

Residues 15 to 18 (RELK) and lysine 121 each bind 5-methyltetrahydropteroyltri-L-glutamate. L-homocysteine-binding positions include 460-462 (IGS) and glutamate 513. L-methionine contacts are provided by residues 460–462 (IGS) and glutamate 513. Residues 544 to 545 (RC) and tryptophan 590 contribute to the 5-methyltetrahydropteroyltri-L-glutamate site. Aspartate 628 is a binding site for L-homocysteine. Aspartate 628 contacts L-methionine. Glutamate 634 is a 5-methyltetrahydropteroyltri-L-glutamate binding site. Positions 670, 672, and 694 each coordinate Zn(2+). The active-site Proton donor is the histidine 723. Cysteine 755 contributes to the Zn(2+) binding site.

Belongs to the vitamin-B12 independent methionine synthase family. Zn(2+) serves as cofactor.

The catalysed reaction is 5-methyltetrahydropteroyltri-L-glutamate + L-homocysteine = tetrahydropteroyltri-L-glutamate + L-methionine. It participates in amino-acid biosynthesis; L-methionine biosynthesis via de novo pathway; L-methionine from L-homocysteine (MetE route): step 1/1. Functionally, catalyzes the transfer of a methyl group from 5-methyltetrahydrofolate to homocysteine resulting in methionine formation. The chain is 5-methyltetrahydropteroyltriglutamate--homocysteine methyltransferase from Nitratidesulfovibrio vulgaris (strain ATCC 29579 / DSM 644 / CCUG 34227 / NCIMB 8303 / VKM B-1760 / Hildenborough) (Desulfovibrio vulgaris).